Consider the following 125-residue polypeptide: Glycine cleavage system H protein (125 aa).

A Lipoyl-binding domain is found at 19 to 101; that stretch reads IATIGITDYA…MGDGWFIKLR (83 aa). N6-lipoyllysine is present on Lys-60.

This sequence belongs to the GcvH family. In terms of assembly, the glycine cleavage system is composed of four proteins: P, T, L and H. (R)-lipoate is required as a cofactor.

In terms of biological role, the glycine cleavage system catalyzes the degradation of glycine. The H protein shuttles the methylamine group of glycine from the P protein to the T protein. This chain is Glycine cleavage system H protein, found in Parvibaculum lavamentivorans (strain DS-1 / DSM 13023 / NCIMB 13966).